The sequence spans 93 residues: Putative pterin-4-alpha-carbinolamine dehydratase (93 aa).

It belongs to the pterin-4-alpha-carbinolamine dehydratase family.

The catalysed reaction is (4aS,6R)-4a-hydroxy-L-erythro-5,6,7,8-tetrahydrobiopterin = (6R)-L-erythro-6,7-dihydrobiopterin + H2O. This is Putative pterin-4-alpha-carbinolamine dehydratase from Mycolicibacterium vanbaalenii (strain DSM 7251 / JCM 13017 / BCRC 16820 / KCTC 9966 / NRRL B-24157 / PYR-1) (Mycobacterium vanbaalenii).